We begin with the raw amino-acid sequence, 377 residues long: Rhodopsin, long-wavelength (377 aa).

The Extracellular segment spans residues 1-51; sequence MIAVSGPSYEAFSYGGQARFNNQTVVDKVPPDMLHLIDANWYQYPPLNPMW. The N-linked (GlcNAc...) asparagine glycan is linked to asparagine 22. A helical transmembrane segment spans residues 52 to 76; it reads HGILGFVIGMLGFVSAMGNGMVVYI. Residues 77–88 lie on the Cytoplasmic side of the membrane; the sequence is FLSTKSLRTPSN. A helical membrane pass occupies residues 89-113; it reads LFVINLAISNFLMMFCMSPPMVINC. The Extracellular portion of the chain corresponds to 114–128; sequence YYETWVLGPLFCQIY. A disulfide bridge connects residues cysteine 125 and cysteine 202. A helical membrane pass occupies residues 129–148; that stretch reads AMLGSLFGCGSIWTMTMIAF. Topologically, residues 149–167 are cytoplasmic; it reads DRYNVIVKGLSGKPLSING. A helical transmembrane segment spans residues 168–191; it reads ALIRIIAIWLFSLGWTIAPMFGWN. Residues 192-215 are Extracellular-facing; it reads RYVPEGNMTACGTDYFNRGLLSAS. N-linked (GlcNAc...) asparagine glycosylation occurs at asparagine 198. The helical transmembrane segment at 216-243 threads the bilayer; that stretch reads YLVCYGIWVYFVPLFLIIYSYWFIIQAV. Residues 244-278 are Cytoplasmic-facing; the sequence is AAHEKNMREQAKKMNVASLRSSENQNTSAECKLAK. The helical transmembrane segment at 279–302 threads the bilayer; sequence VALMTISLWFMAWTPYLVINFSGI. Residues 303 to 309 lie on the Extracellular side of the membrane; it reads FNLVKIS. The chain crosses the membrane as a helical span at residues 310-334; that stretch reads PLFTIWGSLFAKANAVYNPIVYGIS. Position 321 is an N6-(retinylidene)lysine (lysine 321). The Cytoplasmic portion of the chain corresponds to 335 to 377; sequence HPKYRAALFAKFPSLACAAEPSSDAVSTTSGTTTVTDNEKSNA. Low complexity predominate over residues 357–370; the sequence is SDAVSTTSGTTTVT. A disordered region spans residues 357–377; that stretch reads SDAVSTTSGTTTVTDNEKSNA.

It belongs to the G-protein coupled receptor 1 family. Opsin subfamily. Phosphorylated on some or all of the serine and threonine residues present in the C-terminal region.

It localises to the membrane. Its function is as follows. Visual pigments are the light-absorbing molecules that mediate vision. They consist of an apoprotein, opsin, covalently linked to 11-cis-retinal. The chain is Rhodopsin, long-wavelength from Apis mellifera (Honeybee).